Here is a 52-residue protein sequence, read N- to C-terminus: Conotoxin-like peptide 2 (52 aa).

A signal peptide spans 1-18 (MKFSTILLLVCPTVALSA). 3 cysteine pairs are disulfide-bonded: C24–C38, C31–C42, and C37–C49.

The protein localises to the secreted. In Orgyia pseudotsugata (Douglas-fir tussock moth), this protein is Conotoxin-like peptide 2 (CTL-2).